The primary structure comprises 398 residues: Enoyl-[acyl-carrier-protein] reductase [NADH] (398 aa).

Residues 48–53 (GASTGY), 74–75 (FE), 111–112 (DA), and 139–140 (LA) contribute to the NAD(+) site. A substrate-binding site is contributed by Y225. Catalysis depends on Y235, which acts as the Proton donor. NAD(+) contacts are provided by residues K244 and 273–275 (VVT).

Belongs to the TER reductase family. As to quaternary structure, monomer.

It catalyses the reaction a 2,3-saturated acyl-[ACP] + NAD(+) = a (2E)-enoyl-[ACP] + NADH + H(+). The protein operates within lipid metabolism; fatty acid biosynthesis. In terms of biological role, involved in the final reduction of the elongation cycle of fatty acid synthesis (FAS II). Catalyzes the reduction of a carbon-carbon double bond in an enoyl moiety that is covalently linked to an acyl carrier protein (ACP). This Paraburkholderia xenovorans (strain LB400) protein is Enoyl-[acyl-carrier-protein] reductase [NADH].